A 95-amino-acid polypeptide reads, in one-letter code: Small ribosomal subunit protein bS6 (95 aa).

It belongs to the bacterial ribosomal protein bS6 family.

Its function is as follows. Binds together with bS18 to 16S ribosomal RNA. This is Small ribosomal subunit protein bS6 from Bacillus cytotoxicus (strain DSM 22905 / CIP 110041 / 391-98 / NVH 391-98).